The sequence spans 198 residues: Protein GrpE (198 aa).

The protein belongs to the GrpE family. As to quaternary structure, homodimer.

The protein localises to the cytoplasm. Participates actively in the response to hyperosmotic and heat shock by preventing the aggregation of stress-denatured proteins, in association with DnaK and GrpE. It is the nucleotide exchange factor for DnaK and may function as a thermosensor. Unfolded proteins bind initially to DnaJ; upon interaction with the DnaJ-bound protein, DnaK hydrolyzes its bound ATP, resulting in the formation of a stable complex. GrpE releases ADP from DnaK; ATP binding to DnaK triggers the release of the substrate protein, thus completing the reaction cycle. Several rounds of ATP-dependent interactions between DnaJ, DnaK and GrpE are required for fully efficient folding. In Vibrio harveyi (Beneckea harveyi), this protein is Protein GrpE.